Here is a 270-residue protein sequence, read N- to C-terminus: Centriole, cilia and spindle-associated protein (270 aa).

Met1 is subject to N-acetylmethionine. An ST]-E-Y-X(3)-Y motif 1; required for efficient microtubule binding and stabilization motif is present at residues 9-15 (SEYMKRY). Disordered regions lie at residues 50 to 201 (DDWG…SQKT) and 231 to 255 (LVAQRQRAHSVDVEKNRKMKASSSE). Residues 53–67 (GPAGSSEDSASSESS) show a composition bias toward low complexity. The segment covering 75 to 86 (RCAPPSPPPPVE) has biased composition (pro residues). Over residues 92-101 (EAERRARGAP) the composition is skewed to basic and acidic residues. Over residues 102–118 (EEQDAEAGDAEAEDAED) the composition is skewed to acidic residues. Positions 127–144 (KDVEDKPEQQTRTRETDK) are enriched in basic and acidic residues. Over residues 145–156 (SPTSTEPRQQPS) the composition is skewed to polar residues. The ST]-E-Y-X(3)-Y motif 2; required for efficient microtubule binding and stabilization motif lies at 260 to 266 (TEYMRCY).

This sequence belongs to the CCSAP family. Associates with microtubules; the association occurs on polyglutamylated tubulin.

It localises to the cytoplasm. It is found in the cytoskeleton. The protein localises to the microtubule organizing center. Its subcellular location is the centrosome. The protein resides in the centriole. It localises to the spindle. It is found in the cilium basal body. The protein localises to the cilium axoneme. Its subcellular location is the cell projection. The protein resides in the axon. It localises to the cilium. Functionally, plays a role in microtubule (MT) stabilization and this stabilization involves the maintenance of NUMA1 at the spindle poles. Colocalizes with polyglutamylated MTs to promote MT stabilization and regulate bipolar spindle formation in mitosis. Binding of CCSAP to centrosomes and the spindle around centrosomes during mitosis inhibits MT depolymerization, thereby stabilizing the mitotic spindle. May play a role in embryonic development. May be required for proper cilia beating. This is Centriole, cilia and spindle-associated protein (CCSAP) from Homo sapiens (Human).